A 303-amino-acid polypeptide reads, in one-letter code: Oxygen-dependent coproporphyrinogen-III oxidase (303 aa).

Ser-93 contributes to the substrate binding site. The a divalent metal cation site is built by His-97 and His-107. The Proton donor role is filled by His-107. 109–111 (NVR) is a binding site for substrate. A divalent metal cation-binding residues include His-146 and His-176. Positions 241–276 (YVEFNLVYDRGTLFGLQSGGRTESILMSLPPQVRWG) are important for dimerization. 259–261 (GGR) contributes to the substrate binding site.

It belongs to the aerobic coproporphyrinogen-III oxidase family. Homodimer. Requires a divalent metal cation as cofactor.

It is found in the cytoplasm. The enzyme catalyses coproporphyrinogen III + O2 + 2 H(+) = protoporphyrinogen IX + 2 CO2 + 2 H2O. It participates in porphyrin-containing compound metabolism; protoporphyrin-IX biosynthesis; protoporphyrinogen-IX from coproporphyrinogen-III (O2 route): step 1/1. Functionally, involved in the heme biosynthesis. Catalyzes the aerobic oxidative decarboxylation of propionate groups of rings A and B of coproporphyrinogen-III to yield the vinyl groups in protoporphyrinogen-IX. This Pseudomonas entomophila (strain L48) protein is Oxygen-dependent coproporphyrinogen-III oxidase.